An 82-amino-acid chain; its full sequence is MCIGVPGQVLAVGEDIHQLAQVEVCGIKRDVNIALICEGNPADLLGQWVLVHVGFAMSIIDEDEAKATLDALRQMDYDITSA.

The protein belongs to the HupF/HypC family.

The protein operates within protein modification; [NiFe] hydrogenase maturation. Involved in the maturation of [NiFe] hydrogenases. Involved in the biosynthesis of the Fe(CN)(2)CO cofactor. HybG delivers iron-bound CO(2) to HypD where reduction to CO probably occurs. In complex with HypD, accepts the cyanide ligand generated by HypF and HypE, and also coordinates the carbon monoxide ligand. The sequence is that of Hydrogenase maturation factor HybG (hybG) from Escherichia coli O157:H7.